A 631-amino-acid chain; its full sequence is Tail sheath protein (631 aa).

This sequence belongs to the myoviridae tail sheath protein family. As to quaternary structure, homomultimer.

It localises to the virion. Its subcellular location is the host cytoplasm. Polymerizes as an extended structure around the baseplate-tail tube complex. During ejection, the sheath shifts to a contracted form, thereby making the inner tail tube protrude through the host cell envelope. The protein is Tail sheath protein of Salmonella typhi.